A 358-amino-acid polypeptide reads, in one-letter code: UDP-N-acetylglucosamine--N-acetylmuramyl-(pentapeptide) pyrophosphoryl-undecaprenol N-acetylglucosamine transferase (358 aa).

Residues Thr11 to Gly13, Asn124, Arg164, Ser195, and Gln291 contribute to the UDP-N-acetyl-alpha-D-glucosamine site.

It belongs to the glycosyltransferase 28 family. MurG subfamily.

It is found in the cell inner membrane. It carries out the reaction di-trans,octa-cis-undecaprenyl diphospho-N-acetyl-alpha-D-muramoyl-L-alanyl-D-glutamyl-meso-2,6-diaminopimeloyl-D-alanyl-D-alanine + UDP-N-acetyl-alpha-D-glucosamine = di-trans,octa-cis-undecaprenyl diphospho-[N-acetyl-alpha-D-glucosaminyl-(1-&gt;4)]-N-acetyl-alpha-D-muramoyl-L-alanyl-D-glutamyl-meso-2,6-diaminopimeloyl-D-alanyl-D-alanine + UDP + H(+). Its pathway is cell wall biogenesis; peptidoglycan biosynthesis. Cell wall formation. Catalyzes the transfer of a GlcNAc subunit on undecaprenyl-pyrophosphoryl-MurNAc-pentapeptide (lipid intermediate I) to form undecaprenyl-pyrophosphoryl-MurNAc-(pentapeptide)GlcNAc (lipid intermediate II). The polypeptide is UDP-N-acetylglucosamine--N-acetylmuramyl-(pentapeptide) pyrophosphoryl-undecaprenol N-acetylglucosamine transferase (Leptospira interrogans serogroup Icterohaemorrhagiae serovar copenhageni (strain Fiocruz L1-130)).